Here is an 84-residue protein sequence, read N- to C-terminus: Putative membrane protein insertion efficiency factor (84 aa).

The disordered stretch occupies residues 60–84; sequence WSQPGEDPVPDHFSLKRNDTRKQSH. Residues 68-84 show a composition bias toward basic and acidic residues; that stretch reads VPDHFSLKRNDTRKQSH.

This sequence belongs to the UPF0161 family.

The protein resides in the cell membrane. Its function is as follows. Could be involved in insertion of integral membrane proteins into the membrane. The polypeptide is Putative membrane protein insertion efficiency factor (Streptococcus gordonii (strain Challis / ATCC 35105 / BCRC 15272 / CH1 / DL1 / V288)).